We begin with the raw amino-acid sequence, 316 residues long: Beta-ketoacyl-[acyl-carrier-protein] synthase III (316 aa).

Catalysis depends on residues Cys-112 and His-243. The segment at 244–248 (QANIR) is ACP-binding. Residue Asn-273 is part of the active site.

Belongs to the thiolase-like superfamily. FabH family. In terms of assembly, homodimer.

Its subcellular location is the cytoplasm. The enzyme catalyses malonyl-[ACP] + acetyl-CoA + H(+) = 3-oxobutanoyl-[ACP] + CO2 + CoA. Its pathway is lipid metabolism; fatty acid biosynthesis. Catalyzes the condensation reaction of fatty acid synthesis by the addition to an acyl acceptor of two carbons from malonyl-ACP. Catalyzes the first condensation reaction which initiates fatty acid synthesis and may therefore play a role in governing the total rate of fatty acid production. Possesses both acetoacetyl-ACP synthase and acetyl transacylase activities. Its substrate specificity determines the biosynthesis of branched-chain and/or straight-chain of fatty acids. The protein is Beta-ketoacyl-[acyl-carrier-protein] synthase III of Haemophilus ducreyi (strain 35000HP / ATCC 700724).